We begin with the raw amino-acid sequence, 494 residues long: tRNA (guanine(37)-N(1))-methyltransferase (494 aa).

The transit peptide at 1 to 32 directs the protein to the mitochondrion; it reads MRIRRILYFYGNLPNTYTANVLRRLAFSCWHT. S-adenosyl-L-methionine-binding positions include His-278, 316–317, 344–345, and Asn-377; these read DL and DG. The disordered stretch occupies residues 468–494; sequence DTGEPESKRPRTAEAFPLPHVQQSRNS.

The protein belongs to the class I-like SAM-binding methyltransferase superfamily. TRM5/TYW2 family. Monomer.

Its subcellular location is the mitochondrion matrix. The protein resides in the nucleus. It is found in the cytoplasm. It carries out the reaction guanosine(37) in tRNA + S-adenosyl-L-methionine = N(1)-methylguanosine(37) in tRNA + S-adenosyl-L-homocysteine + H(+). Its function is as follows. Involved in mitochondrial tRNA methylation. Specifically methylates the N1 position of guanosine-37 in various tRNAs. Methylation is not dependent on the nature of the nucleoside 5' of the target nucleoside. This is the first step in the biosynthesis of wybutosine (yW), a modified base adjacent to the anticodon of tRNAs and required for accurate decoding. The sequence is that of tRNA (guanine(37)-N(1))-methyltransferase (trmt5) from Xenopus tropicalis (Western clawed frog).